Reading from the N-terminus, the 386-residue chain is S-adenosylmethionine synthase (386 aa).

His16 provides a ligand contact to ATP. Asp18 is a Mg(2+) binding site. Residue Glu44 coordinates K(+). Positions 57 and 100 each coordinate L-methionine. The interval 100-110 (QSRDIAQGVDR) is flexible loop. ATP contacts are provided by residues 165–167 (DAK), Asp240, 246–247 (RK), Ala263, and Lys267. Asp240 provides a ligand contact to L-methionine. Lys271 serves as a coordination point for L-methionine.

This sequence belongs to the AdoMet synthase family. As to quaternary structure, homotetramer; dimer of dimers. The cofactor is Mg(2+). It depends on K(+) as a cofactor.

It is found in the cytoplasm. The enzyme catalyses L-methionine + ATP + H2O = S-adenosyl-L-methionine + phosphate + diphosphate. The protein operates within amino-acid biosynthesis; S-adenosyl-L-methionine biosynthesis; S-adenosyl-L-methionine from L-methionine: step 1/1. In terms of biological role, catalyzes the formation of S-adenosylmethionine (AdoMet) from methionine and ATP. The overall synthetic reaction is composed of two sequential steps, AdoMet formation and the subsequent tripolyphosphate hydrolysis which occurs prior to release of AdoMet from the enzyme. This Francisella tularensis subsp. holarctica (strain FTNF002-00 / FTA) protein is S-adenosylmethionine synthase.